The following is a 146-amino-acid chain: uncharacterized protein (146 aa).

This is an uncharacterized protein from Escherichia coli O157:H7.